The chain runs to 414 residues: BICD family-like cargo adapter 2 (414 aa).

Residues 34-341 are a coiled coil; the sequence is GQALLEKNEE…DALNQQLLNT (308 aa). The segment covering 372-384 has biased composition (basic and acidic residues); the sequence is QEKEKENNKERTG. Residues 372–399 are disordered; it reads QEKEKENNKERTGFQRGTRTTKSLRLRG.

The chain is BICD family-like cargo adapter 2 (bicdl2) from Danio rerio (Zebrafish).